The chain runs to 203 residues: uncharacterized protein (203 aa).

The tract at residues 1-23 (MGSSFVIDRSSSSPAPPRGPAPK) is disordered.

This is an uncharacterized protein from Saccharomyces cerevisiae (strain ATCC 204508 / S288c) (Baker's yeast).